Here is a 318-residue protein sequence, read N- to C-terminus: NADH-ubiquinone oxidoreductase chain 1 (318 aa).

8 helical membrane-spanning segments follow: residues 3 to 23 (FINILTLLIPILIAMAFLTLV), 70 to 90 (LFIIAPTLSLTLALSLWIPLP), 100 to 120 (LGMLFILATSSLSVYSILWSG), 146 to 166 (MAIILLSVLLMSGSFSLQMLI), 171 to 191 (HIWLLIPAWPMAMMWYISTLA), 231 to 251 (IILMNALTSIVFLGPLYHINY), 254 to 273 (LYSTSFMTETLLLSTTFLWI), and 294 to 314 (LPLTLAFCMWYISLPIFLAGI).

Belongs to the complex I subunit 1 family. In terms of assembly, core subunit of respiratory chain NADH dehydrogenase (Complex I) which is composed of 45 different subunits.

It localises to the mitochondrion inner membrane. The enzyme catalyses a ubiquinone + NADH + 5 H(+)(in) = a ubiquinol + NAD(+) + 4 H(+)(out). Its function is as follows. Core subunit of the mitochondrial membrane respiratory chain NADH dehydrogenase (Complex I) which catalyzes electron transfer from NADH through the respiratory chain, using ubiquinone as an electron acceptor. Essential for the catalytic activity and assembly of complex I. The protein is NADH-ubiquinone oxidoreductase chain 1 of Rattus norvegicus (Rat).